Here is a 359-residue protein sequence, read N- to C-terminus: Protein LpfD (359 aa).

Residues 1–24 form the signal peptide; the sequence is MLKKLIMFTGLLGGSVLFSGQALA.

Belongs to the fimbrial protein family.

It is found in the fimbrium. The chain is Protein LpfD (lpfD) from Salmonella typhimurium (strain LT2 / SGSC1412 / ATCC 700720).